The primary structure comprises 964 residues: Probable LRR receptor-like serine/threonine-protein kinase IRK (964 aa).

The signal sequence occupies residues 1–20 (MYKALIFTVLLVSAVAPVRS). The Extracellular segment spans residues 21-603 (LDPPLNDDVL…GHKRILLSIS (583 aa)). LRR repeat units lie at residues 92 to 116 (LQFLHKLSLSNNNLTGIINPNMLLS), 117 to 141 (LVNLKVVDLSSNGLSGSLPDEFFRQ), 143 to 166 (GSLRVLSLAKNKLTGKIPVSISSC), 168 to 190 (SLAALNLSSNGFSGSMPLGIWSL), 191 to 214 (NTLRSLDLSRNELEGEFPEKIDRL), 215 to 238 (NNLRALDLSRNRLSGPIPSEIGSC), 240 to 261 (LLKTIDLSENSLSGSLPNTFQQ), 263 to 286 (SLCYSLNLGKNALEGEVPKWIGEM), 287 to 310 (RSLETLDLSMNKFSGQVPDSIGNL), 312 to 334 (ALKVLNFSGNGLIGSLPVSTANC), and 335 to 358 (INLLALDLSGNSLTGKLPMWLFQD). Asparagine 104 carries N-linked (GlcNAc...) asparagine glycosylation. Residue asparagine 173 is glycosylated (N-linked (GlcNAc...) asparagine). N-linked (GlcNAc...) asparagine glycosylation occurs at asparagine 317. Asparagine 370 carries N-linked (GlcNAc...) asparagine glycosylation. LRR repeat units follow at residues 375–399 (IKKIQVLDLSHNAFSGEIGAGLGDL), 400–423 (RDLEGLHLSRNSLTGPIPSTIGEL), 425–447 (HLSVLDVSHNQLNGMIPRETGGA), 448–471 (VSLEELRLENNLLEGNIPSSIKNC), 472–495 (SSLRSLILSHNKLLGSIPPELAKL), 496–519 (TRLEEVDLSFNELAGTLPKQLANL), and 521–544 (YLHTFNISHNHLFGELPAGGIFNG). Asparagine 470 carries an N-linked (GlcNAc...) asparagine glycan. Residues asparagine 526, asparagine 562, and asparagine 578 are each glycosylated (N-linked (GlcNAc...) asparagine). Residues 604-624 (SLIAISAAAAIVVGVIAITVL) traverse the membrane as a helical segment. The Cytoplasmic portion of the chain corresponds to 625 to 964 (NLRVRASTVS…SGSSDELGSS (340 aa)). A Protein kinase domain is found at 678–951 (LNKDCELGRG…GEAVNILRMI (274 aa)). Residues 684 to 692 (LGRGGFGAV) and lysine 706 contribute to the ATP site.

The protein belongs to the protein kinase superfamily. Ser/Thr protein kinase family. In terms of assembly, interacts with IRKI. Autophosphorylated. Highly expressed in root tips, shoot apices and developing flowers.

Its subcellular location is the cell membrane. It catalyses the reaction L-seryl-[protein] + ATP = O-phospho-L-seryl-[protein] + ADP + H(+). It carries out the reaction L-threonyl-[protein] + ATP = O-phospho-L-threonyl-[protein] + ADP + H(+). This is Probable LRR receptor-like serine/threonine-protein kinase IRK from Arabidopsis thaliana (Mouse-ear cress).